A 708-amino-acid polypeptide reads, in one-letter code: Kelch-like protein 11 (708 aa).

The first 15 residues, 1–15, serve as a signal peptide directing secretion; that stretch reads MAAAAVAAAAAAAAA. Residues 47 to 70 are disordered; sequence DFGPGPGISAMEASGGDPGPEAED. The BTB domain occupies 94-170; the sequence is CDITLCFGGA…MYTGRIRVST (77 aa). One can recognise a BACK domain in the interval 205 to 307; the sequence is CVAIHSLAHM…KPTYLTRHVK (103 aa). Kelch repeat units follow at residues 360–407, 408–453, 455–501, 503–556, and 610–661; these read VIMV…VTES, YVYV…EVKG, LYSI…AIED, FVYI…VVNS, and DVFI…HVRI. Serine 465 carries the phosphoserine modification.

As to quaternary structure, component of a cullin-RING-based BCR (BTB-CUL3-RBX1) E3 ubiquitin-protein ligase complex. Homodimer. Interacts with CUL3.

Its function is as follows. Component of a cullin-RING-based BCR (BTB-CUL3-RBX1) E3 ubiquitin-protein ligase complex that mediates the ubiquitination of target proteins, leading most often to their proteasomal degradation. This is Kelch-like protein 11 (KLHL11) from Homo sapiens (Human).